Consider the following 632-residue polypeptide: MTQSTTSHYYVESPSSRALVVGAIGVVFGDIGTSPLYSLKECFSPEHGIPFSPDAVLGIISMLFWAFVIVVSLKYVMFVMRADNNGEGGILALMALALRTAAPRSRMAKLIMMFGIFGACMFYGDAVITPAISVLSAVEGLEIAAPGLSHFVIPITLLILALLFFIQRSGTHVVGKLFGPIMVVWFLALGALGLIHLVQAPGIVKAINPVYAVSFLHDHSLQAFIVLGSVFLVLTGAEALYADMGHFGAKPIRTAWFVLVMPCLILNYFGQGAMLLGNPDAIENPFYLMVPSALQLPMVLLATAATVIASQAVISGAFSLTSQAIQLGFMPRMRIRYTSAAEIGQIYMPVINWILLVLVICVVLAFKKSDNLAAAYGIAVTTTMVITTFLAALVMRNVWKWNPALVTLISLTFLVVDMSFFAANLLKIAEGGWFPLLMGGSAFFLLMTWHSGRKLLRARSLEDGIPLEPFIAGLLAHPPHRVEGTAVFLTGNTESVPVSLLHNLKHNRVLHERVVFLQFVTRDIPYVDDDERLSCKDLGGGVYILKSEYGFKETPDVQRVLDLAQRKLGMQFELMETSFFIARESVIPSKLPGMSMWRESLFAWMHQNGAKPSDFFSIPANRVVELGTKVEI.

12 helical membrane passes run 19–39 (LVVG…LYSL), 59–79 (IISM…VMFV), 110–130 (LIMM…VITP), 146–166 (PGLS…LFFI), 178–198 (FGPI…IHLV), 221–241 (LQAF…EALY), 256–276 (WFVL…AMLL), 298–318 (MVLL…SGAF), 346–366 (IYMP…VLAF), 375–395 (AYGI…ALVM), 403–423 (PALV…FFAA), and 428–448 (IAEG…LLMT).

The protein belongs to the HAK/KUP transporter (TC 2.A.72) family.

It is found in the cell inner membrane. It catalyses the reaction K(+)(in) + H(+)(in) = K(+)(out) + H(+)(out). Transport of potassium into the cell. Likely operates as a K(+):H(+) symporter. The polypeptide is Probable potassium transport system protein Kup (Cupriavidus metallidurans (strain ATCC 43123 / DSM 2839 / NBRC 102507 / CH34) (Ralstonia metallidurans)).